A 108-amino-acid chain; its full sequence is uncharacterized protein (108 aa).

The segment at 75–94 (TPQVSSFPSSTTSLSHSCTT) is disordered. The segment covering 79–94 (SSFPSSTTSLSHSCTT) has biased composition (low complexity).

This is an uncharacterized protein from Homo sapiens (Human).